A 451-amino-acid chain; its full sequence is Tubulin alpha-1 chain (451 aa).

Gln11 provides a ligand contact to GTP. Residue Lys40 is modified to N6-acetyllysine. 5 residues coordinate GTP: Glu71, Thr145, Thr179, Asn206, and Asn228. A Mg(2+)-binding site is contributed by Glu71. Glu254 is an active-site residue. Positions 429–451 (EKDYEEVGAESGEGEEGDEGEEY) are disordered. A compositionally biased stretch (acidic residues) spans 431 to 451 (DYEEVGAESGEGEEGDEGEEY).

Belongs to the tubulin family. As to quaternary structure, dimer of alpha and beta chains. A typical microtubule is a hollow water-filled tube with an outer diameter of 25 nm and an inner diameter of 15 nM. Alpha-beta heterodimers associate head-to-tail to form protofilaments running lengthwise along the microtubule wall with the beta-tubulin subunit facing the microtubule plus end conferring a structural polarity. Microtubules usually have 13 protofilaments but different protofilament numbers can be found in some organisms and specialized cells. Mg(2+) serves as cofactor. Undergoes a tyrosination/detyrosination cycle, the cyclic removal and re-addition of a C-terminal tyrosine residue by the enzymes tubulin tyrosine carboxypeptidase (TTCP) and tubulin tyrosine ligase (TTL), respectively. In terms of processing, acetylation of alpha chains at Lys-40 stabilizes microtubules and affects affinity and processivity of microtubule motors. This modification has a role in multiple cellular functions, ranging from cell motility, cell cycle progression or cell differentiation to intracellular trafficking and signaling.

The protein resides in the cytoplasm. It is found in the cytoskeleton. It carries out the reaction GTP + H2O = GDP + phosphate + H(+). Its function is as follows. Tubulin is the major constituent of microtubules, a cylinder consisting of laterally associated linear protofilaments composed of alpha- and beta-tubulin heterodimers. Microtubules grow by the addition of GTP-tubulin dimers to the microtubule end, where a stabilizing cap forms. Below the cap, tubulin dimers are in GDP-bound state, owing to GTPase activity of alpha-tubulin. This Anemia phyllitidis (Fern) protein is Tubulin alpha-1 chain (TUBA1).